A 656-amino-acid polypeptide reads, in one-letter code: DNA topoisomerase 3 (656 aa).

A Toprim domain is found at 2–156; that stretch reads KVLCVAEKNS…QVYRAVFSHL (155 aa). Positions 172–635 constitute a Topo IA-type catalytic domain; the sequence is DMKSVHAVGT…DIVEKYRKYW (464 aa). Tyrosine 356 acts as the O-(5'-phospho-DNA)-tyrosine intermediate in catalysis.

Belongs to the type IA topoisomerase family. In terms of assembly, forms a complex with SGS1 and RMI1. Interacts with SGS1.

It carries out the reaction ATP-independent breakage of single-stranded DNA, followed by passage and rejoining.. Functionally, releases the supercoiling and torsional tension of DNA introduced during the DNA replication and transcription by transiently cleaving and rejoining one strand of the DNA duplex. Introduces a single-strand break via transesterification at a target site in duplex DNA. The scissile phosphodiester is attacked by the catalytic tyrosine of the enzyme, resulting in the formation of a DNA-(5'-phosphotyrosyl)-enzyme intermediate and the expulsion of a 3'-OH DNA strand. The free DNA strand than undergoes passage around the unbroken strand thus removing DNA supercoils. Finally, in the religation step, the DNA 3'-OH attacks the covalent intermediate to expel the active-site tyrosine and restore the DNA phosphodiester backbone. Essential for proper chromosome segregation in both meiosis and mitosis. Weakly relaxes negative supercoils and displays a distinct preference for binding single-stranded DNA. The TOP3-SGS1 protein complex may function as a eukaryotic reverse gyrase introducing positive supercoils into extrachromosomal ribosomal DNA rings. The protein is DNA topoisomerase 3 (TOP3) of Saccharomyces cerevisiae (strain ATCC 204508 / S288c) (Baker's yeast).